Reading from the N-terminus, the 153-residue chain is Lipoprotein signal peptidase (153 aa).

2 helical membrane-spanning segments follow: residues 61–81 (YFFVILTVLVIGAALFYLVKN) and 85–105 (SLWLVLSLILIISGGIGNFID). Residues Asp114 and Asp130 contribute to the active site. The helical transmembrane segment at 125 to 145 (IFNVADSYLTVGVLLLILILW) threads the bilayer.

It belongs to the peptidase A8 family.

It localises to the cell membrane. It catalyses the reaction Release of signal peptides from bacterial membrane prolipoproteins. Hydrolyzes -Xaa-Yaa-Zaa-|-(S,diacylglyceryl)Cys-, in which Xaa is hydrophobic (preferably Leu), and Yaa (Ala or Ser) and Zaa (Gly or Ala) have small, neutral side chains.. It functions in the pathway protein modification; lipoprotein biosynthesis (signal peptide cleavage). In terms of biological role, this protein specifically catalyzes the removal of signal peptides from prolipoproteins. In Streptococcus thermophilus (strain CNRZ 1066), this protein is Lipoprotein signal peptidase.